The chain runs to 132 residues: Large ribosomal subunit protein bL12 (132 aa).

The segment at 112–132 (KEAADKAKTQLEGAGGTINLK) is disordered.

The protein belongs to the bacterial ribosomal protein bL12 family. In terms of assembly, homodimer. Part of the ribosomal stalk of the 50S ribosomal subunit. Forms a multimeric L10(L12)X complex, where L10 forms an elongated spine to which 2 to 4 L12 dimers bind in a sequential fashion. Binds GTP-bound translation factors.

In terms of biological role, forms part of the ribosomal stalk which helps the ribosome interact with GTP-bound translation factors. Is thus essential for accurate translation. This Leifsonia xyli subsp. xyli (strain CTCB07) protein is Large ribosomal subunit protein bL12.